Consider the following 328-residue polypeptide: tRNA N6-adenosine threonylcarbamoyltransferase (328 aa).

Positions 111 and 115 each coordinate Fe cation. Residues 133–137 (LVSGG), Asp166, Gly179, Asp183, and Asn270 contribute to the substrate site. Asp296 serves as a coordination point for Fe cation.

The protein belongs to the KAE1 / TsaD family. The cofactor is Fe(2+).

The protein resides in the cytoplasm. It catalyses the reaction L-threonylcarbamoyladenylate + adenosine(37) in tRNA = N(6)-L-threonylcarbamoyladenosine(37) in tRNA + AMP + H(+). Its function is as follows. Required for the formation of a threonylcarbamoyl group on adenosine at position 37 (t(6)A37) in tRNAs that read codons beginning with adenine. Is involved in the transfer of the threonylcarbamoyl moiety of threonylcarbamoyl-AMP (TC-AMP) to the N6 group of A37, together with TsaE and TsaB. TsaD likely plays a direct catalytic role in this reaction. The sequence is that of tRNA N6-adenosine threonylcarbamoyltransferase from Phytoplasma australiense.